A 104-amino-acid polypeptide reads, in one-letter code: Large ribosomal subunit protein uL24 (104 aa).

It belongs to the universal ribosomal protein uL24 family. Part of the 50S ribosomal subunit.

In terms of biological role, one of two assembly initiator proteins, it binds directly to the 5'-end of the 23S rRNA, where it nucleates assembly of the 50S subunit. Its function is as follows. One of the proteins that surrounds the polypeptide exit tunnel on the outside of the subunit. In Halothermothrix orenii (strain H 168 / OCM 544 / DSM 9562), this protein is Large ribosomal subunit protein uL24.